Here is a 347-residue protein sequence, read N- to C-terminus: GMP reductase (347 aa).

Residue 108 to 131 participates in NADP(+) binding; it reads ADFEKTVQILALDPALNFVCIDVA. K(+) contacts are provided by G181 and G183. C186 functions as the Thioimidate intermediate in the catalytic mechanism. 216–239 is an NADP(+) binding site; it reads IVSDGGCTMPGDVAKAFGGGADFV.

The protein belongs to the IMPDH/GMPR family. GuaC type 1 subfamily. Homotetramer.

It carries out the reaction IMP + NH4(+) + NADP(+) = GMP + NADPH + 2 H(+). Its function is as follows. Catalyzes the irreversible NADPH-dependent deamination of GMP to IMP. It functions in the conversion of nucleobase, nucleoside and nucleotide derivatives of G to A nucleotides, and in maintaining the intracellular balance of A and G nucleotides. The polypeptide is GMP reductase (Salmonella paratyphi B (strain ATCC BAA-1250 / SPB7)).